The primary structure comprises 453 residues: Secreted triacylglycerol lipase LIP3 (453 aa).

The first 19 residues, 1 to 19, serve as a signal peptide directing secretion; it reads MKLGIVAFTLISFAAQALA. N-linked (GlcNAc...) asparagine glycosylation occurs at N98. Residues C115 and C284 are joined by a disulfide bond. Catalysis depends on S197, which acts as the Nucleophile. Residue N230 is glycosylated (N-linked (GlcNAc...) asparagine). Residues D344 and H378 contribute to the active site. C360 and C406 are disulfide-bonded.

The protein belongs to the AB hydrolase superfamily. Lipase family. Class Lip subfamily.

It localises to the secreted. The protein localises to the cell wall. It catalyses the reaction a triacylglycerol + H2O = a diacylglycerol + a fatty acid + H(+). The catalysed reaction is a monoacylglycerol + H2O = glycerol + a fatty acid + H(+). It carries out the reaction a diacylglycerol + H2O = a monoacylglycerol + a fatty acid + H(+). Its function is as follows. Secreted lipase involved in Dandruff and seborrheic dermatitis (D/SD) probably via lipase-mediated breakdown of sebaceous lipids and release of irritating free fatty acids. Has triacylglycerol lipase activity and is able to hydrolyze triolein, tristearin, trilinolein, tripalmitoylglycerol and trihexadecenoin. Hydrolyzes diacylglycerols such as distearin, dilinolein, dipalmitoylglycerol and dipalmitolein. Mostly converts monoolein to di- and triolein, while free fatty acids are only produced in low amounts. This is Secreted triacylglycerol lipase LIP3 from Malassezia globosa (strain ATCC MYA-4612 / CBS 7966) (Dandruff-associated fungus).